We begin with the raw amino-acid sequence, 34 residues long: MFSHFEVSENRPRKQPRRKRISLGMINTVVSLDR.

The span at 1–12 shows a compositional bias: basic and acidic residues; the sequence is MFSHFEVSENRP. The interval 1–21 is disordered; that stretch reads MFSHFEVSENRPRKQPRRKRI.

This is an uncharacterized protein from Saccharomyces cerevisiae (strain ATCC 204508 / S288c) (Baker's yeast).